The primary structure comprises 199 residues: Isopentenyl-diphosphate Delta-isomerase (199 aa).

The Mn(2+) site is built by His-40 and His-47. The Nudix hydrolase domain maps to 45 to 186 (PRHLAFSCHV…PALLSPWAVE (142 aa)). Cys-82 is an active-site residue. Cys-82 lines the Mg(2+) pocket. His-84 serves as a coordination point for Mn(2+). Glu-102 is a Mg(2+) binding site. Mn(2+)-binding residues include Glu-131 and Glu-133. Glu-133 is a catalytic residue.

Belongs to the IPP isomerase type 1 family. The cofactor is Mg(2+). It depends on Mn(2+) as a cofactor.

It is found in the cytoplasm. The catalysed reaction is isopentenyl diphosphate = dimethylallyl diphosphate. It participates in isoprenoid biosynthesis; dimethylallyl diphosphate biosynthesis; dimethylallyl diphosphate from isopentenyl diphosphate: step 1/1. Functionally, catalyzes the 1,3-allylic rearrangement of the homoallylic substrate isopentenyl (IPP) to its highly electrophilic allylic isomer, dimethylallyl diphosphate (DMAPP). This chain is Isopentenyl-diphosphate Delta-isomerase, found in Cutibacterium acnes (strain DSM 16379 / KPA171202) (Propionibacterium acnes).